The following is a 430-amino-acid chain: N-acylneuraminate cytidylyltransferase A (430 aa).

A disordered region spans residues 1–29 (MDAVNENGKRAMKDDSHGNSTSPKRRKSR). Over residues 7–17 (NGKRAMKDDSH) the composition is skewed to basic and acidic residues. The Bipartite nuclear localization signal signature appears at 9–27 (KRAMKDDSHGNSTSPKRRK). 6 residues coordinate substrate: Arg-38, Asn-48, Arg-97, Ser-106, Ser-108, and Gln-129. Arg-187 is a catalytic residue.

Belongs to the CMP-NeuNAc synthase family. In terms of assembly, homotetramer.

The protein localises to the nucleus. It catalyses the reaction an N-acylneuraminate + CTP = a CMP-N-acyl-beta-neuraminate + diphosphate. The protein operates within amino-sugar metabolism; N-acetylneuraminate metabolism. Its function is as follows. Catalyzes the activation of N-acetylneuraminic acid (NeuNAc) to cytidine 5'-monophosphate N-acetylneuraminic acid (CMP-NeuNAc), a substrate required for the addition of sialic acid. Also has activity towards N-glycolylneuraminic acid (Neu5Gc). Has weak activity towards 2-keto-3-deoxy-D-glycero-D-galacto-nononic acid (KDN). This chain is N-acylneuraminate cytidylyltransferase A, found in Danio rerio (Zebrafish).